The chain runs to 330 residues: Thiosulfate transporter TsuA (330 aa).

At 1 to 2 (MI) the chain is on the periplasmic side. Residues 3-18 (WTGLLVGFLFGIVLQR) traverse the membrane as a helical segment. The Cytoplasmic segment spans residues 19–36 (GRICFNSAFRDVLLFKDN). The chain crosses the membrane as a helical span at residues 37-59 (YLFKLAVFTLALEMILFVLLSQV). Residues 60 to 70 (GLMQMNPKPLN) lie on the Periplasmic side of the membrane. A helical membrane pass occupies residues 71–87 (LVGNIIGGFVFGLGMVL). At 88–102 (AGGCASGVTYRVGEG) the chain is on the cytoplasmic side. Residues 103-121 (LTTAWFAALFYGLGAYATK) traverse the membrane as a helical segment. The Periplasmic portion of the chain corresponds to 122-162 (SGAFSWWLSWVGQFKSPLSVEESAYYVKGAGPTISSVLGLN). A helical membrane pass occupies residues 163–180 (PWIPALVIAALFILWAFG). Residues 181 to 189 (TKTTSRETK) are Cytoplasmic-facing. A helical transmembrane segment spans residues 190 to 211 (FNWKIASVCLALVAGLGFITST). At 212 to 239 (LSGRKYGLGITGGWINLFQGFLTNSPLN) the chain is on the periplasmic side. The helical transmembrane segment at 240–258 (WEGLEIVGIILGAGVAAAV) threads the bilayer. At 259-269 (AGEFKLRMPKN) the chain is on the cytoplasmic side. Residues 270 to 289 (PVTYLQVGIGGLLMGIGAVT) form a helical membrane-spanning segment. The Periplasmic segment spans residues 290–306 (AGGCNIGHFLTGVPQLA). Residues 307 to 326 (LSSWLASIFFILGNWTMAWI) traverse the membrane as a helical segment. Residues 327 to 330 (LFRR) lie on the Cytoplasmic side of the membrane.

The protein belongs to the TsuA/YedE (TC 9.B.102) family.

Its subcellular location is the cell inner membrane. The enzyme catalyses thiosulfate(in) = thiosulfate(out). Functionally, mediates thiosulfate uptake. The chain is Thiosulfate transporter TsuA from Spirochaeta thermophila (strain ATCC 700085 / DSM 6578 / Z-1203).